We begin with the raw amino-acid sequence, 326 residues long: Nitrogen metabolite regulation-like protein bik4 (326 aa).

NADP(+) is bound by residues 13–18 and 161–164; these read GATGEV and FASN.

Belongs to the NmrA-type oxidoreductase family.

Nitrogen metabolite regulation-like protein involved in the regulation of the gene cluster that mediates the biosynthesis of bikaverin, a red pigment also considered as a mycotoxin. This is Nitrogen metabolite regulation-like protein bik4 from Gibberella fujikuroi (strain CBS 195.34 / IMI 58289 / NRRL A-6831) (Bakanae and foot rot disease fungus).